Here is a 481-residue protein sequence, read N- to C-terminus: Alkaline protease secretion protein AprF (481 aa).

The tract at residues 462–481 is disordered; sequence PAPLHTLSKTDTEENRSALN. Residues 469–481 show a composition bias toward basic and acidic residues; the sequence is SKTDTEENRSALN.

It belongs to the outer membrane factor (OMF) (TC 1.B.17) family.

It localises to the cell outer membrane. Functionally, involved in the secretion of alkaline protease. This Pseudomonas aeruginosa (strain ATCC 15692 / DSM 22644 / CIP 104116 / JCM 14847 / LMG 12228 / 1C / PRS 101 / PAO1) protein is Alkaline protease secretion protein AprF (aprF).